We begin with the raw amino-acid sequence, 872 residues long: Alanine--tRNA ligase (872 aa).

Zn(2+) is bound by residues His567, His571, Cys669, and His673.

Belongs to the class-II aminoacyl-tRNA synthetase family. It depends on Zn(2+) as a cofactor.

It localises to the cytoplasm. The enzyme catalyses tRNA(Ala) + L-alanine + ATP = L-alanyl-tRNA(Ala) + AMP + diphosphate. In terms of biological role, catalyzes the attachment of alanine to tRNA(Ala) in a two-step reaction: alanine is first activated by ATP to form Ala-AMP and then transferred to the acceptor end of tRNA(Ala). Also edits incorrectly charged Ser-tRNA(Ala) and Gly-tRNA(Ala) via its editing domain. This chain is Alanine--tRNA ligase, found in Streptococcus pneumoniae serotype 2 (strain D39 / NCTC 7466).